A 673-amino-acid polypeptide reads, in one-letter code: Estrogen receptor beta (673 aa).

Residues 1–181 (MASSPGLDPH…SAVGKADMHF (181 aa)) are modulating. 2 consecutive NR C4-type zinc fingers follow at residues 182-202 (CAVCHDYASGYHYGVWSCEGC) and 218-242 (CPATNQCTIDKNRRKSCQACRLRKC). Residues 182–247 (CAVCHDYASG…RLRKCYEVGM (66 aa)) constitute a DNA-binding region (nuclear receptor). Positions 316–552 (SPEEFISRIM…DLLLEMLDAN (237 aa)) constitute an NR LBD domain. Residues 553-602 (TSSGGSQPSSSPSSETYSDQHQYPQPPSHLHPGSEQTTADHAIVPPLGPT) are disordered. A compositionally biased stretch (low complexity) spans 554–566 (SSGGSQPSSSPSS).

It belongs to the nuclear hormone receptor family. NR3 subfamily. As to quaternary structure, binds DNA as a homodimer. Can form a heterodimer with ER-alpha. As to expression, abundant in the liver and testes, less abundant in the ovary and barely detectable in the muscle.

Its subcellular location is the nucleus. Its function is as follows. Binds estrogens with an affinity similar to that of ER-alpha, and activates expression of reporter genes containing estrogen response elements (ERE) in an estrogen-dependent manner. The sequence is that of Estrogen receptor beta (esr2) from Micropogonias undulatus (Atlantic croaker).